Consider the following 383-residue polypeptide: Probable transcriptional repressor C1348.12 (383 aa).

The segment at residues 34–60 (CVICRSKKQKCDGQLPCLYCKKYEYQC) is a DNA-binding region (zn(2)-C6 fungal-type).

It is found in the nucleus. Its function is as follows. Probable transcriptional repressor of multidrug resistance genes. The chain is Probable transcriptional repressor C1348.12 from Schizosaccharomyces pombe (strain 972 / ATCC 24843) (Fission yeast).